The sequence spans 314 residues: Acetyl-coenzyme A carboxylase carboxyl transferase subunit beta (314 aa).

A CoA carboxyltransferase N-terminal domain is found at 44–311 (LMNKCPHCGT…VETWQASSPL (268 aa)). Residues Cys48, Cys51, Cys67, and Cys70 each coordinate Zn(2+). The C4-type zinc-finger motif lies at 48–70 (CPHCGTIHYSKDLEKNLRVCKGC).

It belongs to the AccD/PCCB family. Acetyl-CoA carboxylase is a heterohexamer composed of biotin carboxyl carrier protein (AccB), biotin carboxylase (AccC) and two subunits each of ACCase subunit alpha (AccA) and ACCase subunit beta (AccD). Zn(2+) serves as cofactor.

It is found in the cytoplasm. It catalyses the reaction N(6)-carboxybiotinyl-L-lysyl-[protein] + acetyl-CoA = N(6)-biotinyl-L-lysyl-[protein] + malonyl-CoA. It functions in the pathway lipid metabolism; malonyl-CoA biosynthesis; malonyl-CoA from acetyl-CoA: step 1/1. In terms of biological role, component of the acetyl coenzyme A carboxylase (ACC) complex. Biotin carboxylase (BC) catalyzes the carboxylation of biotin on its carrier protein (BCCP) and then the CO(2) group is transferred by the transcarboxylase to acetyl-CoA to form malonyl-CoA. This is Acetyl-coenzyme A carboxylase carboxyl transferase subunit beta from Brevibacillus brevis (strain 47 / JCM 6285 / NBRC 100599).